A 531-amino-acid polypeptide reads, in one-letter code: MSEVPPTDEGWFVLHDFRTVDWDAWREAPTHRREAAVGDGVEYLRKHESIADAEEGSSAVFSVLGHKADILITHFRPTLDALSRAERQFEQTTFAGFTTQPTSYVSVAEISGYTTPGYFENPDAADEGLRQYMQGKLTPEIPNKDYAGFYPMSKRRGETYNWYDLPIDERAEMMEAHAETGKEYAGKIKQVIASSVGFDDYEWGVTLFADDPTDIKDIVYEMRFDEVSAKYGEFGTFYIGQRFPPADLGALLEGKAIPTVEQDVDAPTAHGEAHGHAHGDSPHGSGGGGGSSHGQSPGGASAGGSAHGTEDADHSDSRSTTSADTTQSDTSTNTNTQDSEIREQLAEYDIYAGQPHGEDVYATVLYSEATTDELFSEVEGLRGNFDHYGTHVKTAVYEARNRHRNAVVSIWETQSAAETAAGFISELPDVVSRAGEESGFGTMGMFYTVKSEYRGEFNDTFDTVGGILTEMDGHQQTDLMINLEDENDMFISSQWDAREDAMSFFRSDEFSETVEWGRDVLSERPRHVFLA.

Position 177 (His-177) interacts with heme. Residues 269-340 (AHGEAHGHAH…STNTNTQDSE (72 aa)) form a disordered region. Residues 271-281 (GEAHGHAHGDS) are compositionally biased toward basic and acidic residues. Positions 284 to 306 (GSGGGGGSSHGQSPGGASAGGSA) are enriched in gly residues. Residues 308 to 317 (GTEDADHSDS) show a composition bias toward basic and acidic residues. Positions 318–338 (RSTTSADTTQSDTSTNTNTQD) are enriched in low complexity. The 89-residue stretch at 441-529 (GTMGMFYTVK…VLSERPRHVF (89 aa)) folds into the ABM domain.

It in the N-terminal section; belongs to the ChdC family.

This chain is Putative heme-binding protein HQ_1094A, found in Haloquadratum walsbyi (strain DSM 16790 / HBSQ001).